The chain runs to 445 residues: T-box transcription factor TBX20 (445 aa).

Positions 108 to 287 (LWDKFHELGT…SNPFAKGFRD (180 aa)) form a DNA-binding region, T-box. A disordered region spans residues 318–337 (EEDVLGEESQTTQSRGSAFT). Residues 325–337 (ESQTTQSRGSAFT) are compositionally biased toward polar residues.

Prominently expressed in the extraembryonic mesoderm, developing heart, eye analage and motor neurons of hindbrain and spinal cord. Expressed in extraembryonic tissues such as the amnion and allantois.

It localises to the nucleus. In terms of biological role, acts as a transcriptional activator and repressor required for cardiac development and may have key roles in the maintenance of functional and structural phenotypes in adult heart. This Mus musculus (Mouse) protein is T-box transcription factor TBX20 (Tbx20).